A 706-amino-acid polypeptide reads, in one-letter code: DNA ligase (706 aa).

Residues 47 to 51 (DSEYD), 96 to 97 (SI), and E133 each bind NAD(+). Catalysis depends on K135, which acts as the N6-AMP-lysine intermediate. R156, E192, K323, and K347 together coordinate NAD(+). Residues C441, C444, C459, and C465 each coordinate Zn(2+). One can recognise a BRCT domain in the interval 624 to 706 (VAPKPLSGKT…MRLLASAEAE (83 aa)).

The protein belongs to the NAD-dependent DNA ligase family. LigA subfamily. Mg(2+) serves as cofactor. It depends on Mn(2+) as a cofactor.

The catalysed reaction is NAD(+) + (deoxyribonucleotide)n-3'-hydroxyl + 5'-phospho-(deoxyribonucleotide)m = (deoxyribonucleotide)n+m + AMP + beta-nicotinamide D-nucleotide.. DNA ligase that catalyzes the formation of phosphodiester linkages between 5'-phosphoryl and 3'-hydroxyl groups in double-stranded DNA using NAD as a coenzyme and as the energy source for the reaction. It is essential for DNA replication and repair of damaged DNA. This chain is DNA ligase, found in Polaromonas sp. (strain JS666 / ATCC BAA-500).